A 451-amino-acid chain; its full sequence is MLLDEIKNLNFLIMGLGLNGGGVALSRFLLKRGAKLVITDLKSETELALSIDALRDFEDQIRYVLGKHDVNDFKNADIVVKNPGVKPNNKYLKFAKRIETDISLFLMFNKNPIVAVTGTKGKSTLVSLLYQALKEKYPGVKLGGNIGVSPLSFFDQLDGKSPLILELSSWQLQSLENFNPIISIITNVYNDHQNYYLNFDDYIIDKSKIFVNQTSGIVIIQDQAYCKYFSKFKSKVRVILFSEFNPCDFDQDIFYCNEGKVYFNGNLIGSFSNSRAVFIIPKVITFFVSYYLNIDLNRTGQILSNFKGIEHRLEFVKSVQNVMFYNDTASTIPESTVLSVKSLKTKDNRINLIVGGTDKELDFLSFSKIADIVRTWILIRGSATVKIIKILEKSSIQYFLFDSLRDAVNYAFKISSPGDIVLFSPASASFELFNNEFDRGLQFKNLVNNLG.

118–124 (GTKGKST) lines the ATP pocket.

The protein belongs to the MurCDEF family.

The protein localises to the cytoplasm. It carries out the reaction UDP-N-acetyl-alpha-D-muramoyl-L-alanine + D-glutamate + ATP = UDP-N-acetyl-alpha-D-muramoyl-L-alanyl-D-glutamate + ADP + phosphate + H(+). It functions in the pathway cell wall biogenesis; peptidoglycan biosynthesis. Functionally, cell wall formation. Catalyzes the addition of glutamate to the nucleotide precursor UDP-N-acetylmuramoyl-L-alanine (UMA). This is UDP-N-acetylmuramoylalanine--D-glutamate ligase from Borreliella burgdorferi (strain ZS7) (Borrelia burgdorferi).